We begin with the raw amino-acid sequence, 375 residues long: 23S rRNA (uracil(747)-C(5))-methyltransferase RlmC (375 aa).

[4Fe-4S] cluster is bound by residues Cys-3, Cys-11, Cys-14, and Cys-87. Positions 212, 241, 262, and 307 each coordinate S-adenosyl-L-methionine. Cys-334 serves as the catalytic Nucleophile.

The protein belongs to the class I-like SAM-binding methyltransferase superfamily. RNA M5U methyltransferase family. RlmC subfamily.

It carries out the reaction uridine(747) in 23S rRNA + S-adenosyl-L-methionine = 5-methyluridine(747) in 23S rRNA + S-adenosyl-L-homocysteine + H(+). Catalyzes the formation of 5-methyl-uridine at position 747 (m5U747) in 23S rRNA. The sequence is that of 23S rRNA (uracil(747)-C(5))-methyltransferase RlmC from Escherichia coli O9:H4 (strain HS).